Here is a 571-residue protein sequence, read N- to C-terminus: Glycine--tRNA ligase (571 aa).

Positions 99 and 165 each coordinate substrate. Residues 197–199 (RNE), 207–212 (IRLREF), 324–325 (EC), and 443–446 (GIDR) contribute to the ATP site. Substrate is bound at residue 212–216 (FTQAE). 439–443 (EPSFG) contributes to the substrate binding site.

It belongs to the class-II aminoacyl-tRNA synthetase family.

It localises to the cytoplasm. The enzyme catalyses tRNA(Gly) + glycine + ATP = glycyl-tRNA(Gly) + AMP + diphosphate. Its function is as follows. Catalyzes the attachment of glycine to tRNA(Gly). The polypeptide is Glycine--tRNA ligase (Pyrococcus abyssi (strain GE5 / Orsay)).